The chain runs to 364 residues: uncharacterized protein (364 aa).

This is an uncharacterized protein from Acanthamoeba polyphaga mimivirus (APMV).